Here is a 365-residue protein sequence, read N- to C-terminus: Aminomethyltransferase (365 aa).

It belongs to the GcvT family. In terms of assembly, the glycine cleavage system is composed of four proteins: P, T, L and H.

The enzyme catalyses N(6)-[(R)-S(8)-aminomethyldihydrolipoyl]-L-lysyl-[protein] + (6S)-5,6,7,8-tetrahydrofolate = N(6)-[(R)-dihydrolipoyl]-L-lysyl-[protein] + (6R)-5,10-methylene-5,6,7,8-tetrahydrofolate + NH4(+). The glycine cleavage system catalyzes the degradation of glycine. This Yersinia pestis bv. Antiqua (strain Antiqua) protein is Aminomethyltransferase.